Consider the following 797-residue polypeptide: Protocadherin beta-11 (797 aa).

Positions Met-1–Ala-26 are cleaved as a signal peptide. Topologically, residues Gly-27–Leu-690 are extracellular. 5 Cadherin domains span residues Val-35 to Phe-133, Met-138 to Phe-242, Tyr-247 to Ile-347, Ile-352 to Phe-451, and Tyr-456 to Val-561. Residues Asn-418, Asn-436, Asn-487, and Asn-567 are each glycosylated (N-linked (GlcNAc...) asparagine). In terms of domain architecture, Cadherin 6 spans Gly-568 to Leu-671. A helical transmembrane segment spans residues Val-691 to Val-711. Over Arg-712–Phe-797 the chain is Cytoplasmic.

The protein localises to the cell membrane. Potential calcium-dependent cell-adhesion protein. May be involved in the establishment and maintenance of specific neuronal connections in the brain. The sequence is that of Protocadherin beta-11 (PCDHB11) from Pan troglodytes (Chimpanzee).